The primary structure comprises 398 residues: MTLDVTGLDVELAGTRILDDVHASIRDGHLVGVVGPNGAGKSTLLRAMNGLITPTAGTVLVAGDDVHALSSAAASRRIATVPQDASVSFEFTVRQVVEMGRHPHTTRFGTDTDTAVVDRAMARTGVAQFAARDVTSLSGGERQRVLLARALAQAAPVLLLDEPTASLDVNHQIRTLEVVRDLADSEDRAVVAAIHDLDLAARYCDELVVVADGRVHDAGAPRSVLTPDTIRAAFDARVAVGTDPATGAVTVTPLPDRTSAAADTSVHVVGGGDSATPVVRRLVSAGASVSVGPVVEGDTDHETARRVGCPCTSVAPFTRLEDTTAASATRADIAAADVIAVPVAAAARPGVRGLLTGAVPTLAVGDAAGAPEWADRLVACDAVVSAVGALADTPSDGV.

The 235-residue stretch at 3–237 folds into the ABC transporter domain; the sequence is LDVTGLDVEL…DTIRAAFDAR (235 aa). 35-42 contacts ATP; sequence GPNGAGKS.

The protein belongs to the ABC transporter superfamily. The complex is composed of two ATP-binding proteins (BtuD), two transmembrane proteins (BtuC) and a solute-binding protein (BtuF).

The protein localises to the cell membrane. The catalysed reaction is an R-cob(III)alamin(out) + ATP + H2O = an R-cob(III)alamin(in) + ADP + phosphate + H(+). In terms of biological role, required for corrinoid utilization. Probably part of the ABC transporter complex BtuCDF involved in cobalamin (vitamin B12) import. Probably responsible for energy coupling to the transport system. The protein is Cobalamin import ATP-binding protein BtuD (btuD) of Halobacterium salinarum (strain ATCC 29341 / DSM 671 / R1).